The chain runs to 491 residues: UDP-N-acetylmuramate--L-alanine ligase (491 aa).

Position 126 to 132 (126 to 132 (GTHGKTT)) interacts with ATP.

Belongs to the MurCDEF family.

The protein resides in the cytoplasm. The catalysed reaction is UDP-N-acetyl-alpha-D-muramate + L-alanine + ATP = UDP-N-acetyl-alpha-D-muramoyl-L-alanine + ADP + phosphate + H(+). It functions in the pathway cell wall biogenesis; peptidoglycan biosynthesis. Its function is as follows. Cell wall formation. The polypeptide is UDP-N-acetylmuramate--L-alanine ligase (Salmonella typhimurium (strain LT2 / SGSC1412 / ATCC 700720)).